Here is a 228-residue protein sequence, read N- to C-terminus: Phosphoglycolate phosphatase (228 aa).

The active-site Nucleophile is the aspartate 12. Mg(2+)-binding residues include aspartate 12, aspartate 14, and aspartate 177.

The protein belongs to the HAD-like hydrolase superfamily. CbbY/CbbZ/Gph/YieH family. Mg(2+) is required as a cofactor.

It carries out the reaction 2-phosphoglycolate + H2O = glycolate + phosphate. It participates in organic acid metabolism; glycolate biosynthesis; glycolate from 2-phosphoglycolate: step 1/1. Its function is as follows. Specifically catalyzes the dephosphorylation of 2-phosphoglycolate. Is involved in the dissimilation of the intracellular 2-phosphoglycolate formed during the DNA repair of 3'-phosphoglycolate ends, a major class of DNA lesions induced by oxidative stress. In Vibrio vulnificus (strain CMCP6), this protein is Phosphoglycolate phosphatase.